We begin with the raw amino-acid sequence, 138 residues long: MLIPRKVAHRKQHHPKRTGAAKGGTRIAFGEYAIQSLESAYVTNRQIESARIAMTRHIRRGGKVWINIYPDRPLTKKPAETRMGSGKGSPEWWVANVKPGRIMFELSGVAEPVAREAMRRAIHKLPMKCRFVTREGGA.

Positions 1 to 19 (MLIPRKVAHRKQHHPKRTG) are enriched in basic residues. The disordered stretch occupies residues 1-22 (MLIPRKVAHRKQHHPKRTGAAK).

Belongs to the universal ribosomal protein uL16 family. Part of the 50S ribosomal subunit.

In terms of biological role, binds 23S rRNA and is also seen to make contacts with the A and possibly P site tRNAs. This Parafrankia sp. (strain EAN1pec) protein is Large ribosomal subunit protein uL16.